A 698-amino-acid chain; its full sequence is SHC SH2 domain-binding protein 1 homolog B (698 aa).

PbH1 repeat units lie at residues 480-502 (CAELLMKYSDLYGAKGAGMEIYP), 503-524 (GSKCTLIGNGIHHCRDGILIKD), and 532-554 (IPKIIMENNVIHNNEGYAVVLVK).

Its subcellular location is the midbody. It localises to the cytoplasm. The protein resides in the cytoskeleton. The protein localises to the spindle. Functionally, may play a role in signaling pathways governing cellular proliferation. The polypeptide is SHC SH2 domain-binding protein 1 homolog B (shcbp1-b) (Xenopus laevis (African clawed frog)).